We begin with the raw amino-acid sequence, 1305 residues long: Contactin-associated protein-like 5 (1305 aa).

The first 22 residues, Met1 to Thr22, serve as a signal peptide directing secretion. An F5/8 type C domain is found at Ala23–Cys174. The Extracellular portion of the chain corresponds to Ala23–Ser1236. 2 Laminin G-like domains span residues Ile180–Cys360 and Pro367–Cys544. Intrachain disulfides connect Cys329–Cys360, Cys512–Cys544, Cys550–Cys561, Cys555–Cys570, and Cys572–Cys582. Residues Ile546–His583 enclose the EGF-like 1 domain. The region spanning Asn584–Trp790 is the Fibrinogen C-terminal domain. The Laminin G-like 3 domain maps to Asn791–Cys956. 5 disulfide bridges follow: Cys929-Cys956, Cys960-Cys973, Cys967-Cys982, Cys984-Cys994, and Cys1163-Cys1198. The EGF-like 2 domain occupies Pro957–Lys995. The 182-residue stretch at Pro1017–Cys1198 folds into the Laminin G-like 4 domain. Residues Ala1237–Met1257 traverse the membrane as a helical segment. Topologically, residues Ser1258–Ile1305 are cytoplasmic.

This sequence belongs to the neurexin family. In terms of tissue distribution, expressed in brain.

It is found in the membrane. In terms of biological role, may play a role in the correct development and proper functioning of the peripheral and central nervous system and be involved in cell adhesion and intercellular communication. The polypeptide is Contactin-associated protein-like 5 (CNTNAP5) (Gallus gallus (Chicken)).